We begin with the raw amino-acid sequence, 473 residues long: Keratin, type I cuticular Ha6 (473 aa).

Positions 1 to 93 are head; that stretch reads MATQICTPTF…FCEGAFNGNE (93 aa). Residues 93–404 form the IF rod domain; the sequence is EKATMQILND…RLLDGEDCKL (312 aa). The interval 94-128 is coil 1A; that stretch reads KATMQILNDRLANYLEKVRQLEQENTQLECRIREW. The tract at residues 129-139 is linker 1; it reads YECQIPYICPD. The segment at 140-240 is coil 1B; it reads YQSYFKTAEE…HEEEVNALRS (101 aa). The tract at residues 241 to 256 is linker 12; that stretch reads QLGDRLNVEVDAAPPV. Residues 257–400 are coil 2; the sequence is DLNKILDDMR…ATYRRLLDGE (144 aa). Positions 401–473 are tail; that stretch reads DCKLPAHPCS…SREHVVPRAM (73 aa).

It belongs to the intermediate filament family. Heterotetramer of two type I and two type II keratins. In skin, only expressed in the suprabasal cells of tail scale epidermis. Suprabasally expressed in stratified squamous epithelia and also in the posterior unit of the complex filiform papillae of tongue. Expressed in rare anatomical sites in which an orthokeratinized stratum corneum would be too soft and a hard keratinized structure would be too rigid to meet the functional requirement of the respective epithelia.

This is Keratin, type I cuticular Ha6 from Mus musculus (Mouse).